The sequence spans 367 residues: Heme A synthase (367 aa).

A run of 5 helical transmembrane segments spans residues 25–45 (AIRI…LVGG), 111–131 (FLAR…VLTG), 137–157 (LWLP…IGWW), 174–194 (LATH…FMRA), and 211–231 (LAGL…LVAG). Residue H274 coordinates heme. Helical transmembrane passes span 276-296 (LGAY…LRAA), 305-325 (SVVL…TLLL), and 327-347 (VPLH…GFAI). H335 contributes to the heme binding site.

This sequence belongs to the COX15/CtaA family. Type 2 subfamily. As to quaternary structure, interacts with CtaB. Heme b serves as cofactor.

It localises to the cell membrane. The enzyme catalyses Fe(II)-heme o + 2 A + H2O = Fe(II)-heme a + 2 AH2. The protein operates within porphyrin-containing compound metabolism; heme A biosynthesis; heme A from heme O: step 1/1. In terms of biological role, catalyzes the conversion of heme O to heme A by two successive hydroxylations of the methyl group at C8. The first hydroxylation forms heme I, the second hydroxylation results in an unstable dihydroxymethyl group, which spontaneously dehydrates, resulting in the formyl group of heme A. The sequence is that of Heme A synthase from Rhizobium rhizogenes (strain K84 / ATCC BAA-868) (Agrobacterium radiobacter).